We begin with the raw amino-acid sequence, 559 residues long: Nuclear envelope integral membrane protein (559 aa).

A signal peptide spans 1 to 15 (MRLLTLALLVAGSLA). N67, N81, and N114 each carry an N-linked (GlcNAc...) asparagine glycan. A run of 5 helical transmembrane segments spans residues 164-184 (YTSG…FIVW), 192-212 (IGVP…HFAW), 218-238 (IMIE…LISM), 267-287 (LIYF…ALII), and 290-310 (ICRG…KAVW). N-linked (GlcNAc...) asparagine glycosylation is found at N408 and N465. Disordered stretches follow at residues 475–494 (RRDS…PRMP) and 510–559 (KNGR…DADE). The span at 517 to 526 (PSSSTASGMT) shows a compositional bias: polar residues. The segment covering 530 to 539 (YMRKARRIDA) has biased composition (basic and acidic residues).

Belongs to the NEMP family.

Its subcellular location is the nucleus inner membrane. Functionally, contributes to nuclear envelope stiffness in germ cells. Required for fertility. The sequence is that of Nuclear envelope integral membrane protein from Caenorhabditis elegans.